Reading from the N-terminus, the 53-residue chain is MFRWGIIFLVIALIAAALGFGGLAGTAAGAAKIVFVVGIILFLVSLFTGRKRP.

The next 2 membrane-spanning stretches (helical) occupy residues 4 to 24 (WGIIFLVIALIAAALGFGGLA) and 30 to 47 (AAKIVFVVGIILFLVSLF).

It belongs to the UPF0391 family.

It is found in the cell membrane. The polypeptide is UPF0391 membrane protein ECA0470 (Pectobacterium atrosepticum (strain SCRI 1043 / ATCC BAA-672) (Erwinia carotovora subsp. atroseptica)).